A 541-amino-acid chain; its full sequence is Glutamyl-tRNA(Gln) amidotransferase subunit B, mitochondrial (541 aa).

Belongs to the GatB/GatE family. GatB subfamily. Subunit of the heterotrimeric GatFAB amidotransferase (AdT) complex, composed of A (HER2), B (PET112) and F (YGR102C) subunits.

Its subcellular location is the mitochondrion. It catalyses the reaction L-glutamyl-tRNA(Gln) + L-glutamine + ATP + H2O = L-glutaminyl-tRNA(Gln) + L-glutamate + ADP + phosphate + H(+). Functionally, allows the formation of correctly charged Gln-tRNA(Gln) through the transamidation of misacylated Glu-tRNA(Gln) in the mitochondria. The reaction takes place in the presence of glutamine and ATP through an activated gamma-phospho-Glu-tRNA(Gln). The sequence is that of Glutamyl-tRNA(Gln) amidotransferase subunit B, mitochondrial from Saccharomyces cerevisiae (strain ATCC 204508 / S288c) (Baker's yeast).